The following is a 149-amino-acid chain: Interleukin-2 (149 aa).

Positions 1–20 (MYRMQLLSCIALTLAVLANS) are cleaved as a signal peptide. O-linked (GalNAc...) threonine glycosylation is present at T23. Cysteines 78 and 121 form a disulfide. N106 carries an N-linked (GlcNAc...) asparagine glycan.

Belongs to the IL-2 family.

The protein resides in the secreted. Functionally, cytokine produced by activated CD4-positive helper T-cells and to a lesser extend activated CD8-positive T-cells and natural killer (NK) cells that plays pivotal roles in the immune response and tolerance. Binds to a receptor complex composed of either the high-affinity trimeric IL-2R (IL2RA/CD25, IL2RB/CD122 and IL2RG/CD132) or the low-affinity dimeric IL-2R (IL2RB and IL2RG). Interaction with the receptor leads to oligomerization and conformation changes in the IL-2R subunits resulting in downstream signaling starting with phosphorylation of JAK1 and JAK3. In turn, JAK1 and JAK3 phosphorylate the receptor to form a docking site leading to the phosphorylation of several substrates including STAT5. This process leads to activation of several pathways including STAT, phosphoinositide-3-kinase/PI3K and mitogen-activated protein kinase/MAPK pathways. Functions as a T-cell growth factor and can increase NK-cell cytolytic activity as well. Promotes strong proliferation of activated B-cells and subsequently immunoglobulin production. Plays a pivotal role in regulating the adaptive immune system by controlling the survival and proliferation of regulatory T-cells, which are required for the maintenance of immune tolerance. Moreover, participates in the differentiation and homeostasis of effector T-cell subsets, including Th1, Th2, Th17 as well as memory CD8-positive T-cells. The polypeptide is Interleukin-2 (IL2) (Equus caballus (Horse)).